Here is a 239-residue protein sequence, read N- to C-terminus: 1-(5-phosphoribosyl)-5-[(5-phosphoribosylamino)methylideneamino] imidazole-4-carboxamide isomerase (239 aa).

Aspartate 8 functions as the Proton acceptor in the catalytic mechanism. Aspartate 129 (proton donor) is an active-site residue.

The protein belongs to the HisA/HisF family.

The protein resides in the cytoplasm. It carries out the reaction 1-(5-phospho-beta-D-ribosyl)-5-[(5-phospho-beta-D-ribosylamino)methylideneamino]imidazole-4-carboxamide = 5-[(5-phospho-1-deoxy-D-ribulos-1-ylimino)methylamino]-1-(5-phospho-beta-D-ribosyl)imidazole-4-carboxamide. Its pathway is amino-acid biosynthesis; L-histidine biosynthesis; L-histidine from 5-phospho-alpha-D-ribose 1-diphosphate: step 4/9. This is 1-(5-phosphoribosyl)-5-[(5-phosphoribosylamino)methylideneamino] imidazole-4-carboxamide isomerase from Bacillus cereus (strain AH187).